The chain runs to 330 residues: Mas-related G-protein coupled receptor member X2 (330 aa).

At 1–33 the chain is on the extracellular side; the sequence is MDPTTPAWGTESTTMNGNDQALPLLCGKETLIL. Residues 34 to 54 form a helical membrane-spanning segment; that stretch reads VLLILFIALVGLVGNAFVLWL. At 55-63 the chain is on the cytoplasmic side; the sequence is LGFRMRRNA. The chain crosses the membrane as a helical span at residues 64-84; sequence FSVYVLSLAGADFLFLCFPMI. Residues 85 to 96 lie on the Extracellular side of the membrane; it reads NCLEYLINFFHS. A helical transmembrane segment spans residues 97–117; sequence ISINFPSFFTTVMTCAYLAGL. Topologically, residues 118–144 are cytoplasmic; sequence SMLSAISTERCLSVLWPIWYRCRRPRH. Residues 145 to 165 form a helical membrane-spanning segment; it reads LSAVLCVLLWALSLLLSILEG. Topologically, residues 166-184 are extracellular; it reads KFCGLLFSDGDSGWCQTFD. A helical transmembrane segment spans residues 185–205; that stretch reads FITAAWLMFLFVVLCGSSLAL. The Cytoplasmic segment spans residues 206–228; sequence LVRILCGSQGLPLTRLYLTILLT. The chain crosses the membrane as a helical span at residues 229–249; sequence VLIFLLCGLPFGIQWFLILWI. Residues 250-264 are Extracellular-facing; it reads WKNSDVLFCHIHPVS. A helical membrane pass occupies residues 265–285; it reads VVLSSFNSSANPIIYFFVGSF. At 286 to 330 the chain is on the cytoplasmic side; the sequence is RKQWRLRQPVLKLALQRALQDTAEVDHSEGCFSQGTLEMSGSSLV.

It belongs to the G-protein coupled receptor 1 family. Mas subfamily.

Its subcellular location is the cell membrane. Its function is as follows. Mast cell-specific receptor for basic secretagogues, i.e. cationic amphiphilic drugs, as well as endo- or exogenous peptides, consisting of a basic head group and a hydrophobic core. Recognizes and binds small molecules containing a cyclized tetrahydroisoquinoline (THIQ), such as non-steroidal neuromuscular blocking drugs (NMBDs), including tubocurarine and atracurium. In response to these compounds, mediates pseudo-allergic reactions characterized by histamine release, inflammation and airway contraction. In Rhinopithecus bieti (Black snub-nosed monkey), this protein is Mas-related G-protein coupled receptor member X2 (MRGPRX2).